Reading from the N-terminus, the 209-residue chain is Protein lin-28 homolog A (209 aa).

The tract at residues Met1–Ala31 is disordered. Gly2 bears the N-acetylglycine mark. Ser3 carries the post-translational modification Phosphoserine. The 74-residue stretch at His39–Pro112 folds into the CSD domain. Positions Gly113–Gly136 are flexible linker. Position 120 is a phosphoserine (Ser120). CCHC-type zinc fingers lie at residues Asp137 to Leu154 and Lys159 to Leu176. Positions Ala178–Asn209 are disordered. The residue at position 200 (Ser200) is a Phosphoserine.

The protein belongs to the lin-28 family. Monomer. During skeletal muscle differentiation, associated with translation initiation complexes in the polysomal compartment. Directly interacts with EIF3S2. Interacts with NCL in an RNA-dependent manner. Interacts (via C-terminus) with DHX9 (via N- and C-terminus); this interaction occurs in a RNA-independent manner. Interacts with TUT4 in the presence of pre-let-7 RNA. In terms of tissue distribution, expressed in embryonic stem cells, placenta and testis. Tends to be up-regulated in HER2-overexpressing breast tumors.

It localises to the cytoplasm. Its subcellular location is the rough endoplasmic reticulum. It is found in the P-body. The protein localises to the stress granule. The protein resides in the nucleus. It localises to the nucleolus. Its function is as follows. RNA-binding protein that inhibits processing of pre-let-7 miRNAs and regulates translation of mRNAs that control developmental timing, pluripotency and metabolism. Seems to recognize a common structural G-quartet (G4) feature in its miRNA and mRNA targets. 'Translational enhancer' that drives specific mRNAs to polysomes and increases the efficiency of protein synthesis. Its association with the translational machinery and target mRNAs results in an increased number of initiation events per molecule of mRNA and, indirectly, in mRNA stabilization. Binds IGF2 mRNA, MYOD1 mRNA, ARBP/36B4 ribosomal protein mRNA and its own mRNA. Essential for skeletal muscle differentiation program through the translational up-regulation of IGF2 expression. Suppressor of microRNA (miRNA) biogenesis, including that of let-7, miR107, miR-143 and miR-200c. Specifically binds the miRNA precursors (pre-miRNAs), recognizing an 5'-GGAG-3' motif found in pre-miRNA terminal loop, and recruits TUT4 and TUT7 uridylyltransferases. This results in the terminal uridylation of target pre-miRNAs. Uridylated pre-miRNAs fail to be processed by Dicer and undergo degradation. The repression of let-7 expression is required for normal development and contributes to maintain the pluripotent state by preventing let-7-mediated differentiation of embryonic stem cells. Localized to the periendoplasmic reticulum area, binds to a large number of spliced mRNAs and inhibits the translation of mRNAs destined for the ER, reducing the synthesis of transmembrane proteins, ER or Golgi lumen proteins, and secretory proteins. Binds to and enhances the translation of mRNAs for several metabolic enzymes, such as PFKP, PDHA1 or SDHA, increasing glycolysis and oxidative phosphorylation. Which, with the let-7 repression may enhance tissue repair in adult tissue. This chain is Protein lin-28 homolog A (LIN28A), found in Homo sapiens (Human).